The following is a 67-amino-acid chain: MAILRTSEIRTMTIEERADELENLKNELVRERALTSAGGAPDNPGRIGEIRRTIARIKTIQHELNEI.

The protein belongs to the universal ribosomal protein uL29 family.

The protein is Large ribosomal subunit protein uL29 of Methanosarcina mazei (strain ATCC BAA-159 / DSM 3647 / Goe1 / Go1 / JCM 11833 / OCM 88) (Methanosarcina frisia).